Here is a 405-residue protein sequence, read N- to C-terminus: S-arrestin (405 aa).

Residue Thr-234 is modified to Phosphothreonine.

Belongs to the arrestin family. In terms of assembly, monomer. Homodimer. Homotetramer. Interacts with RHO (via the phosphorylated C-terminus). Detected in retina, in the proximal portion of the outer segment of rod photoreceptor cells (at protein level).

It is found in the cell projection. Its subcellular location is the cilium. The protein localises to the photoreceptor outer segment. It localises to the membrane. Binds to photoactivated, phosphorylated RHO and terminates RHO signaling via G-proteins by competing with G-proteins for the same binding site on RHO. May play a role in preventing light-dependent degeneration of retinal photoreceptor cells. The chain is S-arrestin (SAG) from Homo sapiens (Human).